A 272-amino-acid polypeptide reads, in one-letter code: Glutamate racemase (272 aa).

Substrate is bound by residues 12–13 and 44–45; these read DS and YG. The active-site Proton donor/acceptor is the Cys-75. 76–77 provides a ligand contact to substrate; sequence NT. Catalysis depends on Cys-185, which acts as the Proton donor/acceptor. 186–187 provides a ligand contact to substrate; it reads TH.

Belongs to the aspartate/glutamate racemases family.

The catalysed reaction is L-glutamate = D-glutamate. Its pathway is cell wall biogenesis; peptidoglycan biosynthesis. In terms of biological role, provides the (R)-glutamate required for cell wall biosynthesis. The sequence is that of Glutamate racemase from Mycobacterium leprae (strain TN).